Reading from the N-terminus, the 220-residue chain is GTP cyclohydrolase 1 (220 aa).

Residues Cys109, His112, and Cys180 each contribute to the Zn(2+) site.

The protein belongs to the GTP cyclohydrolase I family. Homomer.

The catalysed reaction is GTP + H2O = 7,8-dihydroneopterin 3'-triphosphate + formate + H(+). The protein operates within cofactor biosynthesis; 7,8-dihydroneopterin triphosphate biosynthesis; 7,8-dihydroneopterin triphosphate from GTP: step 1/1. The chain is GTP cyclohydrolase 1 from Edwardsiella ictaluri (strain 93-146).